We begin with the raw amino-acid sequence, 249 residues long: NADH-quinone oxidoreductase subunit C (249 aa).

The interval 1–29 is disordered; that stretch reads MTENQTTPDPGEPGSSADRPGGLVPTGDS.

The protein belongs to the complex I 30 kDa subunit family. As to quaternary structure, NDH-1 is composed of 14 different subunits. Subunits NuoB, C, D, E, F, and G constitute the peripheral sector of the complex.

The protein localises to the cell membrane. The enzyme catalyses a quinone + NADH + 5 H(+)(in) = a quinol + NAD(+) + 4 H(+)(out). In terms of biological role, NDH-1 shuttles electrons from NADH, via FMN and iron-sulfur (Fe-S) centers, to quinones in the respiratory chain. The immediate electron acceptor for the enzyme in this species is believed to be a menaquinone. Couples the redox reaction to proton translocation (for every two electrons transferred, four hydrogen ions are translocated across the cytoplasmic membrane), and thus conserves the redox energy in a proton gradient. This chain is NADH-quinone oxidoreductase subunit C, found in Saccharopolyspora erythraea (strain ATCC 11635 / DSM 40517 / JCM 4748 / NBRC 13426 / NCIMB 8594 / NRRL 2338).